Here is a 430-residue protein sequence, read N- to C-terminus: tRNA(Ile)-lysidine synthase (430 aa).

21 to 26 serves as a coordination point for ATP; the sequence is SGGLDS.

The protein belongs to the tRNA(Ile)-lysidine synthase family.

Its subcellular location is the cytoplasm. It carries out the reaction cytidine(34) in tRNA(Ile2) + L-lysine + ATP = lysidine(34) in tRNA(Ile2) + AMP + diphosphate + H(+). Functionally, ligates lysine onto the cytidine present at position 34 of the AUA codon-specific tRNA(Ile) that contains the anticodon CAU, in an ATP-dependent manner. Cytidine is converted to lysidine, thus changing the amino acid specificity of the tRNA from methionine to isoleucine. In Salmonella choleraesuis (strain SC-B67), this protein is tRNA(Ile)-lysidine synthase.